A 364-amino-acid polypeptide reads, in one-letter code: Alanine racemase (364 aa).

Lysine 35 acts as the Proton acceptor; specific for D-alanine in catalysis. The residue at position 35 (lysine 35) is an N6-(pyridoxal phosphate)lysine. Arginine 132 contacts substrate. The Proton acceptor; specific for L-alanine role is filled by tyrosine 260. Substrate is bound at residue methionine 308.

It belongs to the alanine racemase family. It depends on pyridoxal 5'-phosphate as a cofactor.

It catalyses the reaction L-alanine = D-alanine. It functions in the pathway amino-acid biosynthesis; D-alanine biosynthesis; D-alanine from L-alanine: step 1/1. Its function is as follows. Catalyzes the interconversion of L-alanine and D-alanine. May also act on other amino acids. This is Alanine racemase (alr) from Acidithiobacillus ferrooxidans (strain ATCC 23270 / DSM 14882 / CIP 104768 / NCIMB 8455) (Ferrobacillus ferrooxidans (strain ATCC 23270)).